The primary structure comprises 214 residues: Phosphatidylserine decarboxylase proenzyme (214 aa).

Catalysis depends on S182, which acts as the Schiff-base intermediate with substrate; via pyruvic acid. S182 carries the post-translational modification Pyruvic acid (Ser); by autocatalysis.

Belongs to the phosphatidylserine decarboxylase family. PSD-A subfamily. Heterodimer of a large membrane-associated beta subunit and a small pyruvoyl-containing alpha subunit. Pyruvate is required as a cofactor. In terms of processing, is synthesized initially as an inactive proenzyme. Formation of the active enzyme involves a self-maturation process in which the active site pyruvoyl group is generated from an internal serine residue via an autocatalytic post-translational modification. Two non-identical subunits are generated from the proenzyme in this reaction, and the pyruvate is formed at the N-terminus of the alpha chain, which is derived from the carboxyl end of the proenzyme. The post-translation cleavage follows an unusual pathway, termed non-hydrolytic serinolysis, in which the side chain hydroxyl group of the serine supplies its oxygen atom to form the C-terminus of the beta chain, while the remainder of the serine residue undergoes an oxidative deamination to produce ammonia and the pyruvoyl prosthetic group on the alpha chain.

Its subcellular location is the cell membrane. The enzyme catalyses a 1,2-diacyl-sn-glycero-3-phospho-L-serine + H(+) = a 1,2-diacyl-sn-glycero-3-phosphoethanolamine + CO2. Its pathway is phospholipid metabolism; phosphatidylethanolamine biosynthesis; phosphatidylethanolamine from CDP-diacylglycerol: step 2/2. Its function is as follows. Catalyzes the formation of phosphatidylethanolamine (PtdEtn) from phosphatidylserine (PtdSer). In Burkholderia cenocepacia (strain ATCC BAA-245 / DSM 16553 / LMG 16656 / NCTC 13227 / J2315 / CF5610) (Burkholderia cepacia (strain J2315)), this protein is Phosphatidylserine decarboxylase proenzyme.